The sequence spans 842 residues: Translation initiation factor IF-2 (842 aa).

Disordered regions lie at residues 1-41 (MVAK…GFPD) and 112-219 (RPNR…QTYQ). 2 stretches are compositionally biased toward basic and acidic residues: residues 32 to 41 (PEDKKQGFPD) and 153 to 165 (RRGE…RDFS). In terms of domain architecture, tr-type G spans 328-497 (ARPPVVTVMG…MLQAEVMELR (170 aa)). Residues 337-344 (GHVDHGKT) are G1. A GTP-binding site is contributed by 337-344 (GHVDHGKT). The interval 362 to 366 (GITQH) is G2. The segment at 383 to 386 (DTPG) is G3. GTP contacts are provided by residues 383–387 (DTPGH) and 437–440 (NKID). Residues 437–440 (NKID) are G4. Positions 473 to 475 (SAL) are G5.

This sequence belongs to the TRAFAC class translation factor GTPase superfamily. Classic translation factor GTPase family. IF-2 subfamily.

It localises to the cytoplasm. In terms of biological role, one of the essential components for the initiation of protein synthesis. Protects formylmethionyl-tRNA from spontaneous hydrolysis and promotes its binding to the 30S ribosomal subunits. Also involved in the hydrolysis of GTP during the formation of the 70S ribosomal complex. In Treponema pallidum (strain Nichols), this protein is Translation initiation factor IF-2 (infB).